The chain runs to 441 residues: Anti-sigma-I factor RsgI (441 aa).

Over 1-53 the chain is Cytoplasmic; it reads MMNKGIVMDIKKHSVVVLTPNGEFITCKRKGDSCMIGEEISFDEQEQKASRFS. The region spanning 3-51 is the RsgI N-terminal anti-sigma domain; it reads NKGIVMDIKKHSVVVLTPNGEFITCKRKGDSCMIGEEISFDEQEQKASR. The helical transmembrane segment at 54 to 76 threads the bilayer; that stretch reads IPYFLKPASLLVACFLCALLFFY. Residues 77 to 441 are Extracellular-facing; that stretch reads NQPEEKVFAY…HQQGNEKKNQ (365 aa). Residues 213 to 441 form a disordered region; it reads ENEKNKSVTP…HQQGNEKKNQ (229 aa). Over residues 219–230 the composition is skewed to polar residues; the sequence is SVTPPATPSNPV. Residues 240–251 are compositionally biased toward low complexity; it reads PDSSPDVVPDLS. The segment covering 252 to 281 has biased composition (basic and acidic residues); it reads SVKDKKYEKPEYKEQKKIEEQPTKQIKENN. Low complexity-rich tracts occupy residues 282–328, 336–358, and 366–408; these read GRGS…QQGN, NNGH…QQGN, and NNGH…NGRG. Over residues 411–428 the composition is skewed to polar residues; it reads KENVGNEQGNNGRGSQQE. Positions 429-441 are enriched in basic and acidic residues; it reads NRGHQQGNEKKNQ.

As to quaternary structure, interacts (via RsgI N-terminal anti-sigma domain) with SigI.

It is found in the cell membrane. Its function is as follows. Anti-sigma factor for SigI. Negatively regulates SigI activity through direct interaction. Has no direct effect on virulence gene expression. In Bacillus anthracis, this protein is Anti-sigma-I factor RsgI.